The following is a 360-amino-acid chain: MSLSRLHIDSFRNIASAQLQLGDGLNLIYGQNGSGKTSILEAIFFLGMGRSFRSHLSQRVIQNDQDKLTLFAQLEQGEQETKIGLRRYRSGETEVKMNGEKVKRLSTLAETLPIQVITPESFSLLFEGPKSRRQFIDWGAFHTDKSFYTAWANVRRILKHRNQMLKSETPYQQIQFWDKELVRYAEIVTEIRKRYVGSLNERLKGIIEEFLPQVDVKVSFTRGWDSKTDYQTLLQAQYPRDLAAGHTASGPHKADLRLRVGTLPVQDALSRGQLKLLVCALRIAQGKLLKQQIDKNSIYLVDDLPSELDARHRQLLLQQLSDTGAQVFVTAIEPAAIMDSLNTPPVKVFHVEQGRVTVIE.

30–37 (GQNGSGKT) serves as a coordination point for ATP.

It belongs to the RecF family.

The protein resides in the cytoplasm. The RecF protein is involved in DNA metabolism; it is required for DNA replication and normal SOS inducibility. RecF binds preferentially to single-stranded, linear DNA. It also seems to bind ATP. This is DNA replication and repair protein RecF from Shewanella loihica (strain ATCC BAA-1088 / PV-4).